The sequence spans 345 residues: Transcription initiation factor IIB (345 aa).

Residues 20-53 (IVLTCPECKVYPPKIVERFSEGDVVCALCGLVLS) form a TFIIB-type zinc finger. Residues Cys-24, Cys-27, Cys-45, and Cys-48 each contribute to the Zn(2+) site. Residues 65 to 78 (TFSNDDHNGDDPSR) are compositionally biased toward basic and acidic residues. A disordered region spans residues 65–93 (TFSNDDHNGDDPSRVGEASNPLLDGNNLS). A run of 2 repeats spans residues 136 to 212 (LCDA…IMKN) and 242 to 318 (FCSH…ILYE).

The protein belongs to the TFIIB family. In terms of assembly, associates with TFIID-IIA (DA complex) to form TFIID-IIA-IIB (DAB-complex) which is then recognized by polymerase II.

It localises to the nucleus. General factor that plays a major role in the activation of eukaryotic genes transcribed by RNA polymerase II. The chain is Transcription initiation factor IIB (SUA7) from Saccharomyces cerevisiae (strain ATCC 204508 / S288c) (Baker's yeast).